A 2641-amino-acid polypeptide reads, in one-letter code: Prosolanapyrone synthase (2641 aa).

In terms of domain architecture, Ketosynthase family 3 (KS3) spans 14 to 440 (PEPIAIVGMG…GANGHCIIDD (427 aa)). Catalysis depends on for beta-ketoacyl synthase activity residues cysteine 187, histidine 323, and histidine 363. A disordered region spans residues 456-515 (SIGHINGHTNGHTNGHTNGHTNGHTNGHTNGHTNGAHASDGHNGHHQNGMNGNSASHMSE). The span at 461 to 490 (NGHTNGHTNGHTNGHTNGHTNGHTNGHTNG) shows a compositional bias: low complexity. Positions 619 to 920 (FVFTGQGAQW…KGPVGQISRS (302 aa)) are malonyl-CoA:ACP transacylase (MAT). Positions 1011 to 1149 (HDLLGSKLPG…GRVRVIAGTS (139 aa)) are N-terminal hotdog fold. A dehydratase (DH) domain region spans residues 1011–1309 (HDLLGSKLPG…GNLRCVTYTE (299 aa)). The 303-residue stretch at 1011–1313 (HDLLGSKLPG…CVTYTEVLPS (303 aa)) folds into the PKS/mFAS DH domain. Histidine 1043 acts as the Proton acceptor; for dehydratase activity in catalysis. The C-terminal hotdog fold stretch occupies residues 1161-1313 (ARTLDTKAWY…CVTYTEVLPS (153 aa)). Residue aspartate 1227 is the Proton donor; for dehydratase activity of the active site. The tract at residues 1477-1665 (TGAYPQLVRF…GAELVLDDYP (189 aa)) is methyltransferase (MT) domain. Positions 1894-2206 (GLLTSLYFKP…KGTHVGKLVV (313 aa)) are enoyl reductase (ER) domain. Residues 2231–2408 (NYLITGGLGG…STVSFGLIRD (178 aa)) are ketoreductase (KR) domain. The Carrier domain occupies 2561 to 2639 (RTVALVTDAI…ILANKIVDGA (79 aa)). An O-(pantetheine 4'-phosphoryl)serine modification is found at serine 2598.

The protein operates within phytotoxin biosynthesis. Prosolanapyrone synthase; part of the gene cluster that mediates the biosynthesis of the phytotoxin solanapyrone, a causal agent of early blight disease of potato and tomato. The prosolanapyrone synthase sol1 is a polyketide synthase that produces the octaketide desmethylprosolanapyrone I via sequential condensations of 7 malonyl-CoA units with one acetyl-CoA unit, and one methylation step. The octaketide backbone is further methylated by the sol2 O-methyltransferase to yield prosolanapyrone I. Prosolanapyrone I is hydroxylated to prosolanapyrone II by the cytochrome P450 monooxygenase sol6. The solanapyrone synthase sol5 then catalyzes the oxidation of prosolanapyrone II and the subsequent Diels Alder cycloisomerization of the product prosolanapyrone III to solanapyrones A and D. Solanapyrones A and D are then converted into solanapyrones B and E, respectively, by the sol3 dehydrogenase. This is Prosolanapyrone synthase (sol1) from Alternaria solani.